We begin with the raw amino-acid sequence, 120 residues long: MIVGIGVDLVSVRRMQQLLERFGNRFTTRAFSEVEIRDSLQYKNAHAVARHFAKRFAAKEAYVKAVGLGFGRGIEMRGVSVFNDALGKPRIAVSGDVGHNVELSLSDDGEYAIAFVVLHV.

Positions 8 and 60 each coordinate Mg(2+).

The protein belongs to the P-Pant transferase superfamily. AcpS family. The cofactor is Mg(2+).

It is found in the cytoplasm. It carries out the reaction apo-[ACP] + CoA = holo-[ACP] + adenosine 3',5'-bisphosphate + H(+). In terms of biological role, transfers the 4'-phosphopantetheine moiety from coenzyme A to a Ser of acyl-carrier-protein. The chain is Holo-[acyl-carrier-protein] synthase from Anaplasma marginale (strain Florida).